Reading from the N-terminus, the 453-residue chain is Chromosomal replication initiator protein DnaA (453 aa).

A domain I, interacts with DnaA modulators region spans residues 1 to 75 (MSENMEELWS…SLKKISGKQL (75 aa)). Positions 75-114 (LKIKFLLPGEKIKMEEQNNENEEKPESTSKKSSQGSEHTT) are domain II. The span at 87-103 (KMEEQNNENEEKPESTS) shows a compositional bias: basic and acidic residues. The interval 87 to 112 (KMEEQNNENEEKPESTSKKSSQGSEH) is disordered. A domain III, AAA+ region region spans residues 115–331 (WLNPKYTFDT…GGLIRVIAYS (217 aa)). Positions 159, 161, 162, and 163 each coordinate ATP. Residues 332–453 (SMANKKITKE…DEIKNLLHGD (122 aa)) are domain IV, binds dsDNA.

This sequence belongs to the DnaA family. In terms of assembly, oligomerizes as a right-handed, spiral filament on DNA at oriC.

Its subcellular location is the cytoplasm. Its function is as follows. Plays an essential role in the initiation and regulation of chromosomal replication. ATP-DnaA binds to the origin of replication (oriC) to initiate formation of the DNA replication initiation complex once per cell cycle. Binds the DnaA box (a 9 base pair repeat at the origin) and separates the double-stranded (ds)DNA. Forms a right-handed helical filament on oriC DNA; dsDNA binds to the exterior of the filament while single-stranded (ss)DNA is stabiized in the filament's interior. The ATP-DnaA-oriC complex binds and stabilizes one strand of the AT-rich DNA unwinding element (DUE), permitting loading of DNA polymerase. After initiation quickly degrades to an ADP-DnaA complex that is not apt for DNA replication. Binds acidic phospholipids. This is Chromosomal replication initiator protein DnaA from Natranaerobius thermophilus (strain ATCC BAA-1301 / DSM 18059 / JW/NM-WN-LF).